The following is a 275-amino-acid chain: Dermonecrotic toxin LhSicTox-alphaVI1i (275 aa).

Residue H5 is part of the active site. Positions 25 and 27 each coordinate Mg(2+). The active-site Nucleophile is the H41. Intrachain disulfides connect C45-C51 and C47-C192. Residue D85 coordinates Mg(2+).

It belongs to the arthropod phospholipase D family. Class II subfamily. It depends on Mg(2+) as a cofactor. In terms of tissue distribution, expressed by the venom gland.

It is found in the secreted. The catalysed reaction is an N-(acyl)-sphingosylphosphocholine = an N-(acyl)-sphingosyl-1,3-cyclic phosphate + choline. The enzyme catalyses an N-(acyl)-sphingosylphosphoethanolamine = an N-(acyl)-sphingosyl-1,3-cyclic phosphate + ethanolamine. It catalyses the reaction a 1-acyl-sn-glycero-3-phosphocholine = a 1-acyl-sn-glycero-2,3-cyclic phosphate + choline. It carries out the reaction a 1-acyl-sn-glycero-3-phosphoethanolamine = a 1-acyl-sn-glycero-2,3-cyclic phosphate + ethanolamine. In terms of biological role, dermonecrotic toxins cleave the phosphodiester linkage between the phosphate and headgroup of certain phospholipids (sphingolipid and lysolipid substrates), forming an alcohol (often choline) and a cyclic phosphate. This toxin acts on sphingomyelin (SM). It may also act on ceramide phosphoethanolamine (CPE), lysophosphatidylcholine (LPC) and lysophosphatidylethanolamine (LPE), but not on lysophosphatidylserine (LPS), and lysophosphatidylglycerol (LPG). It acts by transphosphatidylation, releasing exclusively cyclic phosphate products as second products. Induces dermonecrosis, hemolysis, increased vascular permeability, edema, inflammatory response, and platelet aggregation. This is Dermonecrotic toxin LhSicTox-alphaVI1i from Loxosceles hirsuta (Recluse spider).